The following is a 251-amino-acid chain: Insulin-induced gene 1 protein (251 aa).

Residues 1–58 (MQTLEEHCWSCSCTRGRDKKGTRLSTWLAQRAAKAMSSLNSLLSLAYHTLASSEGRSL) lie on the Cytoplasmic side of the membrane. Residues 59-81 (IRRSLVLFAVGVFLALVLNLLQI) form a helical membrane-spanning segment. Residues 82-100 (QRNVTLFPEEVIATIFSSA) are Extracellular-facing. Residues 101–118 (WWVPPCCGTAAAVVGLLY) form a helical membrane-spanning segment. Residues 119-133 (PCIDSHLGEPHKFKR) lie on the Cytoplasmic side of the membrane. Residues 134 to 156 (EWASVMRCIAVFVGINHASAKLD) traverse the membrane as a helical segment. Residues 157 to 159 (FAN) are Extracellular-facing. The helical transmembrane segment at 160–178 (NVQLSLTLAALSLGLWWTF) threads the bilayer. Over 179–183 (DRSRS) the chain is Cytoplasmic. Residues 184 to 205 (GLGLGITIAFLATLITQFLVYN) form a helical membrane-spanning segment. The Extracellular segment spans residues 206–219 (GVYQYTSPDFLYIR). The chain crosses the membrane as a helical span at residues 220–237 (SWLPCIFFSGGVTVGNIG). Residues 238–251 (RQLAMGSSEKTHSD) are Cytoplasmic-facing. Positions 245–251 (SEKTHSD) match the KxHxx motif.

This sequence belongs to the INSIG family. Interacts with scap; interaction is direct and only takes place in the presence of sterols; it prevents interaction between scap and the coat protein complex II (COPII). Associates with the SCAP-SREBP complex; association is mediated via its interaction with scap and only takes place in the presence of sterols.

Its subcellular location is the endoplasmic reticulum membrane. Its function is as follows. Oxysterol-binding protein that mediates feedback control of cholesterol synthesis by controlling both endoplasmic reticulum to Golgi transport of scap and degradation of hmgcr. Acts as a negative regulator of cholesterol biosynthesis by mediating the retention of the SCAP-SREBP complex in the endoplasmic reticulum, thereby blocking the processing of sterol regulatory element-binding proteins (SREBPs). Binds oxysterol, including 25-hydroxycholesterol, regulating interaction with scap and retention of the SCAP-SREBP complex in the endoplasmic reticulum. In presence of oxysterol, interacts with scap, retaining the SCAP-SREBP complex in the endoplasmic reticulum, thereby preventing scap from escorting SREBPs to the Golgi. Sterol deprivation reduces oxysterol-binding, disrupting the interaction between insig1 and scap, thereby promoting Golgi transport of the SCAP-SREBP complex, followed by processing and nuclear translocation of SREBPs. Also regulates cholesterol synthesis by regulating degradation of hmgcr. This is Insulin-induced gene 1 protein from Xenopus tropicalis (Western clawed frog).